A 209-amino-acid chain; its full sequence is Transcription factor atf31 (209 aa).

Polar residues predominate over residues 90–103; it reads SKSPSIISEASHNS. Residues 90–133 form a disordered region; that stretch reads SKSPSIISEASHNSPSRELDDSGDENTSKLTGTKQSMLKARNRQ. One can recognise a bZIP domain in the interval 121 to 184; the sequence is GTKQSMLKAR…IKLRTLVFAH (64 aa). The segment at 123–161 is basic motif; it reads KQSMLKARNRQAAQKCRIKKKKYLQTLQDQVNYYTSENK. The leucine-zipper stretch occupies residues 163 to 177; that stretch reads LLQSANDLREEIIKL.

Belongs to the bZIP family.

The protein resides in the nucleus. The polypeptide is Transcription factor atf31 (atf31) (Schizosaccharomyces pombe (strain 972 / ATCC 24843) (Fission yeast)).